The chain runs to 462 residues: Hydroxymethylglutaryl-CoA synthase (462 aa).

The active-site Proton donor/acceptor is the Glu92. Cys124 (acyl-thioester intermediate) is an active-site residue. The (3S)-3-hydroxy-3-methylglutaryl-CoA site is built by Cys124, Thr167, Ser219, His257, Lys266, Asn327, and Ser360. His257 serves as the catalytic Proton donor/acceptor. Lys408 is covalently cross-linked (Glycyl lysine isopeptide (Lys-Gly) (interchain with G-Cter in SUMO)).

It belongs to the thiolase-like superfamily. HMG-CoA synthase family. Ubiquitinated.

It catalyses the reaction acetoacetyl-CoA + acetyl-CoA + H2O = (3S)-3-hydroxy-3-methylglutaryl-CoA + CoA + H(+). The protein operates within metabolic intermediate biosynthesis; (R)-mevalonate biosynthesis; (R)-mevalonate from acetyl-CoA: step 2/3. Its function is as follows. This enzyme condenses acetyl-CoA with acetoacetyl-CoA to form HMG-CoA, which is the substrate for HMG-CoA reductase. This Caenorhabditis elegans protein is Hydroxymethylglutaryl-CoA synthase.